Reading from the N-terminus, the 216-residue chain is 3-isopropylmalate dehydratase small subunit (216 aa).

It belongs to the LeuD family. LeuD type 1 subfamily. Heterodimer of LeuC and LeuD.

The enzyme catalyses (2R,3S)-3-isopropylmalate = (2S)-2-isopropylmalate. It functions in the pathway amino-acid biosynthesis; L-leucine biosynthesis; L-leucine from 3-methyl-2-oxobutanoate: step 2/4. Its function is as follows. Catalyzes the isomerization between 2-isopropylmalate and 3-isopropylmalate, via the formation of 2-isopropylmaleate. This is 3-isopropylmalate dehydratase small subunit from Polaromonas naphthalenivorans (strain CJ2).